Here is a 488-residue protein sequence, read N- to C-terminus: Integrin beta-like protein 1 (488 aa).

Positions 1–21 are cleaved as a signal peptide; it reads MHAGAFINFVWALSLVSLLAA. 40 disulfides stabilise this stretch: C38–C65, C49–C63, C57–C68, C70–C83, C85–C106, C90–C104, C98–C109, C111–C120, C126–C153, C137–C151, C145–C156, C158–C172, C174–C196, C179–C194, C188–C199, C201–C210, C214–C241, C225–C239, C233–C244, C246–C263, C265–C290, C270–C288, C282–C293, C295–C304, C310–C337, C321–C335, C329–C340, C342–C355, C357–C378, C362–C376, C370–C381, C383–C392, C398–C425, C409–C423, C417–C428, C430–C442, C444–C465, C449–C463, C457–C468, and C470–C479. 10 I-EGF domains span residues 38-84, 85-121, 126-173, 174-211, 214-264, 265-305, 310-356, 357-393, 398-443, and 444-480; these read CRLP…PLCE, CHDWVCHTYDGQVCAGHGQCDCGVCKCDVGWSGEACQ, CDLT…KYCE, CDDTECFDDETQEICGGHGKCYCGNCYCEAGWHGDKCE, CDIT…DTCE, CDER…RKCE, CALS…KNCE, CDDRQCEDLEGKICGEHGTCSCGRCICEAGWFGKLCQ, CNMT…EFCE, and CDDRDCDKHDGLICTGNGICNCGNCECWEGWNGNACE. The I repeat unit spans residues 49 to 89; it reads CRTPDGSICSGRGSCDCGICLCEVKEAGKYYGPLCECHDWV. The tract at residues 49–488 is cysteine-rich tandem repeats; sequence CRTPDGSICS…CEIWLGSEYP (440 aa). An II repeat occupies 90-136; it reads CHTYDGQVCAGHGQCDCGVCKCDVGWSGEACQYPTTCDLTRKKSNEM. Residues 137 to 178 form an III repeat; sequence CKNSQAVICSNAGTCQCGRCKCENSDNSGLIYGKYCECDDTE. One copy of the IV repeat lies at 179–224; the sequence is CFDDETQEICGGHGKCYCGNCYCEAGWHGDKCEFQCDITPWEIKKR. A V repeat occupies 225–269; the sequence is CTSPDGKICSNRGTCVCGECTCHDVDPTGDWGDIHGDTCECDERN. The stretch at 270-320 is one VI repeat; that stretch reads CKSVYDRYSDDFCSGHGQCNCGRCDCKDGWTGRKCEHPRACALSIEESKKK. The stretch at 321 to 361 is one VII repeat; sequence CQGSASQPCSGRGKCECGQCTCFPPGDSKVYGKNCECDDRQ. Residues 362–408 form a VIII repeat; the sequence is CEDLEGKICGEHGTCSCGRCICEAGWFGKLCQHERKCNMTEEESKSQ. N-linked (GlcNAc...) asparagine glycosylation is present at N399. Residues 409–448 form an IX repeat; sequence CESDDGILCSGKGSCHCGKCICSPQEWYVSGEFCECDDRD. The X repeat unit spans residues 449–488; sequence CDKHDGLICTGNGICNCGNCECWEGWNGNACEIWLGSEYP.

The protein resides in the secreted. The polypeptide is Integrin beta-like protein 1 (itgbl1) (Xenopus laevis (African clawed frog)).